Consider the following 872-residue polypeptide: Chaperone protein ClpB 2 (872 aa).

Positions 6–148 constitute a Clp R domain; the sequence is PNQFTEKAWE…KNIIKQVRGS (143 aa). 2 repeat regions span residues 9–73 and 85–148; these read FTEK…IQRQ and LGRS…VRGS. Residues 161–342 are NBD1; sequence QSLEKYGRDL…RRFQQVYVDQ (182 aa). Residue 208–215 coordinates ATP; it reads GEPGVGKT. Residues 343 to 551 are linker; it reads PSVEDTISIL…IAEIISKWTG (209 aa). Residues 393–527 are a coiled coil; that stretch reads IDLVDEAAAR…TERELSQTQG (135 aa). Positions 561 to 772 are NBD2; sequence EKEKLLHLED…RIDEVIIFHS (212 aa). 611–618 provides a ligand contact to ATP; the sequence is GPTGVGKT. A C-terminal region spans residues 773–872; that stretch reads LDKKELRQIV…SRLPVEVFSS (100 aa).

Belongs to the ClpA/ClpB family. In terms of assembly, homohexamer. The oligomerization is ATP-dependent.

It is found in the cytoplasm. Its function is as follows. Part of a stress-induced multi-chaperone system, it is involved in the recovery of the cell from heat-induced damage, in cooperation with DnaK, DnaJ and GrpE. Acts before DnaK, in the processing of protein aggregates. Protein binding stimulates the ATPase activity; ATP hydrolysis unfolds the denatured protein aggregates, which probably helps expose new hydrophobic binding sites on the surface of ClpB-bound aggregates, contributing to the solubilization and refolding of denatured protein aggregates by DnaK. The protein is Chaperone protein ClpB 2 (clpB2) of Nostoc sp. (strain PCC 7120 / SAG 25.82 / UTEX 2576).